A 224-amino-acid chain; its full sequence is Response regulator protein GraR (224 aa).

Positions 2-115 (QILLVEDDNT…VLIAKLQAIY (114 aa)) constitute a Response regulatory domain. Asp-51 is subject to 4-aspartylphosphate. The ompR/PhoB-type DNA-binding region spans 126–224 (KRTLTWQDAI…KVGKGYMAHE (99 aa)). A phosphothreonine mark is found at Thr-128, Thr-130, and Thr-149.

Interacts with GraX. Post-translationally, phosphorylated by GraS. Phosphorylated by Stk1; phosphorylation increases the DNA-binding activity of GraR.

It localises to the cytoplasm. Functionally, member of the two-component regulatory system GraR/GraS involved in resistance against cationic antimicrobial peptides (CAMPs). Upon phosphorylation by GraS, functions as a transcription regulator by direct binding to promoter regions of target genes such as adhesins, exoproteins, transporters, toxins, and proteins involved in cell wall synthesis. Down-regulates the expression of many genes involved in RNA and amino acid synthesis or glycolysis. This chain is Response regulator protein GraR (graR), found in Staphylococcus aureus (strain bovine RF122 / ET3-1).